The sequence spans 455 residues: Ectonucleoside triphosphate diphosphohydrolase 6 (455 aa).

At Met1–Met12 the chain is on the cytoplasmic side. Residues Thr13–Ile32 form a helical; Signal-anchor for type II membrane protein membrane-spanning segment. Topologically, residues Lys33–Leu455 are lumenal. A glycan (N-linked (GlcNAc...) asparagine) is linked at Asn192. The active-site Proton acceptor is Glu196. N-linked (GlcNAc...) asparagine glycosylation occurs at Asn256. 2 disulfides stabilise this stretch: Cys297–Cys327 and Cys387–Cys401.

This sequence belongs to the GDA1/CD39 NTPase family. Requires Ca(2+) as cofactor. Mg(2+) serves as cofactor. Post-translationally, might be cleaved at the N-terminus, retained in an intracellular membrane compartment and in addition be released into the extracellular medium. N-glycosylated. In terms of tissue distribution, expressed in heart and brain.

It is found in the golgi apparatus membrane. It localises to the secreted. The protein localises to the cell membrane. The enzyme catalyses a ribonucleoside 5'-diphosphate + H2O = a ribonucleoside 5'-phosphate + phosphate + H(+). The catalysed reaction is IDP + H2O = IMP + phosphate + H(+). It carries out the reaction GDP + H2O = GMP + phosphate + H(+). It catalyses the reaction UDP + H2O = UMP + phosphate + H(+). Catalyzes the hydrolysis of nucleoside triphosphates and diphosphates in a calcium- or magnesium-dependent manner. Has a strong preference for nucleoside diphosphates, preferentially hydrolyzes GDP, IDP, and UDP, with slower hydrolysis of CDP, ITP, GTP, CTP, ADP, and UTP and virtually no hydrolysis of ATP. The membrane bound form might support glycosylation reactions in the Golgi apparatus and, when released from cells, might catalyze the hydrolysis of extracellular nucleotides. The polypeptide is Ectonucleoside triphosphate diphosphohydrolase 6 (Entpd6) (Rattus norvegicus (Rat)).